Here is a 413-residue protein sequence, read N- to C-terminus: Calsequestrin-2 (413 aa).

A signal peptide spans methionine 1–alanine 19. Tyrosine 282 is subject to Phosphotyrosine. N-linked (GlcNAc...) asparagine glycosylation is present at asparagine 335. A disordered region spans residues valine 365–glutamate 413. A compositionally biased stretch (acidic residues) spans glutamate 373 to glutamate 413. A phosphoserine mark is found at serine 398 and serine 405.

This sequence belongs to the calsequestrin family. Monomer, homodimer and homooligomer. Mostly monomeric in the absence of calcium. Forms higher oligomers in a calcium-dependent manner. Dimers associate to form tetramers, that then form linear homomer chains. Interacts with ASPH and TRDN. Post-translationally, phosphorylation in the C-terminus, probably by CK2, moderately increases calcium buffering capacity. N-glycosylated. As to expression, detected in stomach and vas deferens (at protein level).

The protein resides in the sarcoplasmic reticulum lumen. Functionally, calsequestrin is a high-capacity, moderate affinity, calcium-binding protein and thus acts as an internal calcium store in muscle. Calcium ions are bound by clusters of acidic residues at the protein surface, especially at the interface between subunits. Can bind around 60 Ca(2+) ions. Regulates the release of lumenal Ca(2+) via the calcium release channel RYR2; this plays an important role in triggering muscle contraction. Plays a role in excitation-contraction coupling in the heart and in regulating the rate of heart beats. This Rattus norvegicus (Rat) protein is Calsequestrin-2 (Casq2).